Here is a 192-residue protein sequence, read N- to C-terminus: Fibroblast growth factor 4B (192 aa).

Positions 1–22 (MTVQLALVPILLLGTAAVMVHC) are cleaved as a signal peptide.

It belongs to the heparin-binding growth factors family.

The protein localises to the secreted. Functionally, plays an important role in the regulation of embryonic development, cell proliferation, and cell differentiation. Good candidate for an inducing factor with possible roles both in mesoderm induction at the blastula stage and in the formation of the anteroposterior axis at the gastrula stage. In Xenopus laevis (African clawed frog), this protein is Fibroblast growth factor 4B (fgf4-b).